A 104-amino-acid chain; its full sequence is uncharacterized protein (104 aa).

The 102-residue stretch at 3–104 folds into the HIT domain; sequence VFEKIIQGEI…HFHILSGDKH (102 aa). The Histidine triad motif signature appears at 93–97; it reads HLHFH.

This is an uncharacterized protein from Helicobacter pylori (strain J99 / ATCC 700824) (Campylobacter pylori J99).